Consider the following 589-residue polypeptide: Putative adenine deaminase BC_3012 (589 aa).

This sequence belongs to the metallo-dependent hydrolases superfamily. Adenine deaminase family.

The catalysed reaction is adenine + H2O + H(+) = hypoxanthine + NH4(+). In Bacillus cereus (strain ATCC 14579 / DSM 31 / CCUG 7414 / JCM 2152 / NBRC 15305 / NCIMB 9373 / NCTC 2599 / NRRL B-3711), this protein is Putative adenine deaminase BC_3012.